Consider the following 363-residue polypeptide: Protein RecA (363 aa).

ATP is bound at residue 78–85; that stretch reads GPESGGKT.

It belongs to the RecA family.

It localises to the cytoplasm. Its function is as follows. Can catalyze the hydrolysis of ATP in the presence of single-stranded DNA, the ATP-dependent uptake of single-stranded DNA by duplex DNA, and the ATP-dependent hybridization of homologous single-stranded DNAs. It interacts with LexA causing its activation and leading to its autocatalytic cleavage. Probably involved in base excision repair. Functionally, following severe irradiation (7 kGy of gamma irradiation) genomic DNA is fragmented. DNA is progressively degraded for the first 1.5 hours after IR, in a step promoted by RecA and counterbalanced by DNA Pol I and Pol III, followed by massive DNA synthesis and genome reassembly in the next hour. Optimal priming of DNA synthesis requires both RecA and RadA, Pol III initiates DNA synthesis while both Pol I and Pol III are required for its continuation. In the absence of RecA the majority of the chromosome is still reconstituted, via either single-strand annealing or non-homologous end joining. The chain is Protein RecA from Deinococcus radiodurans (strain ATCC 13939 / DSM 20539 / JCM 16871 / CCUG 27074 / LMG 4051 / NBRC 15346 / NCIMB 9279 / VKM B-1422 / R1).